The primary structure comprises 550 residues: CTP synthase (550 aa).

Residues methionine 1 to leucine 272 form an amidoligase domain region. Serine 14 contacts CTP. Residue serine 14 coordinates UTP. Serine 15–leucine 20 serves as a coordination point for ATP. Residue tyrosine 55 coordinates L-glutamine. Aspartate 72 contacts ATP. Mg(2+) contacts are provided by aspartate 72 and glutamate 146. CTP is bound by residues aspartate 153–glutamate 155, lysine 193–glutamine 198, and lysine 229. UTP is bound by residues lysine 193–glutamine 198 and lysine 229. The Glutamine amidotransferase type-1 domain occupies threonine 297–glutamine 550. Glycine 359 is an L-glutamine binding site. Cysteine 386 functions as the Nucleophile; for glutamine hydrolysis in the catalytic mechanism. L-glutamine contacts are provided by residues leucine 387–glutamine 390, glutamate 410, and arginine 478. Catalysis depends on residues histidine 523 and glutamate 525.

The protein belongs to the CTP synthase family. Homotetramer.

It carries out the reaction UTP + L-glutamine + ATP + H2O = CTP + L-glutamate + ADP + phosphate + 2 H(+). It catalyses the reaction L-glutamine + H2O = L-glutamate + NH4(+). The catalysed reaction is UTP + NH4(+) + ATP = CTP + ADP + phosphate + 2 H(+). It participates in pyrimidine metabolism; CTP biosynthesis via de novo pathway; CTP from UDP: step 2/2. Allosterically activated by GTP, when glutamine is the substrate; GTP has no effect on the reaction when ammonia is the substrate. The allosteric effector GTP functions by stabilizing the protein conformation that binds the tetrahedral intermediate(s) formed during glutamine hydrolysis. Inhibited by the product CTP, via allosteric rather than competitive inhibition. In terms of biological role, catalyzes the ATP-dependent amination of UTP to CTP with either L-glutamine or ammonia as the source of nitrogen. Regulates intracellular CTP levels through interactions with the four ribonucleotide triphosphates. This is CTP synthase from Lawsonia intracellularis (strain PHE/MN1-00).